The chain runs to 1638 residues: Ciliary rootlet coiled-coil protein 2 (1638 aa).

Residues Met1 to Gly20 show a composition bias toward polar residues. Disordered regions lie at residues Met1–Leu21, Arg39–Ser92, Ala396–His423, and Thr1168–Glu1213. The span at Ser67–Pro82 shows a compositional bias: low complexity. The stretch at Thr85–Glu144 forms a coiled coil. The segment covering Ser406–Ser421 has biased composition (polar residues). Coiled coils occupy residues Leu426–Glu1234 and Leu1281–Ala1315. Residues Arg1180–Val1193 show a composition bias toward basic and acidic residues. Disordered regions lie at residues Arg1338–Asp1383 and Ala1506–Ser1551. Positions Ser1349–Tyr1371 are enriched in polar residues. Coiled-coil stretches lie at residues Arg1412 to Ala1506 and Arg1542 to Glu1576.

It belongs to the rootletin family.

The protein is Ciliary rootlet coiled-coil protein 2 of Mus musculus (Mouse).